Consider the following 317-residue polypeptide: Transaldolase (317 aa).

Lysine 132 acts as the Schiff-base intermediate with substrate in catalysis.

This sequence belongs to the transaldolase family. Type 1 subfamily. In terms of assembly, homodimer.

It localises to the cytoplasm. It catalyses the reaction D-sedoheptulose 7-phosphate + D-glyceraldehyde 3-phosphate = D-erythrose 4-phosphate + beta-D-fructose 6-phosphate. It functions in the pathway carbohydrate degradation; pentose phosphate pathway; D-glyceraldehyde 3-phosphate and beta-D-fructose 6-phosphate from D-ribose 5-phosphate and D-xylulose 5-phosphate (non-oxidative stage): step 2/3. Functionally, transaldolase is important for the balance of metabolites in the pentose-phosphate pathway. The protein is Transaldolase of Haemophilus influenzae (strain 86-028NP).